The following is a 959-amino-acid chain: Transcription factor 1 (959 aa).

2 consecutive C2H2-type zinc fingers follow at residues 2–24 and 30–52; these read VFCTYCGHSFTRDEHLERHILTH and FKCFTCHMSFARRDLLQGHYTVH. The zn(2)-C6 fungal-type DNA-binding region spans 79 to 105; it reads CSNCAKTKTKCDKKFPCSRCASRNLRC. The interval 154–226 is disordered; that stretch reads PTGHVEESSK…SFPGFDDYNQ (73 aa). A compositionally biased stretch (low complexity) spans 163-178; that stretch reads KSSSPSGSPTSISHNS.

Its subcellular location is the nucleus. Elsinochromes biosynthesis cluster-specific transcription factor that positively regulates the expression of cluster genes including RDT1, PKS1, PRF1 and HP1, and subsequent elsinochromes production. In Elsinoe fawcettii (Citrus scab fungus), this protein is Transcription factor 1.